A 330-amino-acid polypeptide reads, in one-letter code: 2-methoxy-6-polyprenyl-1,4-benzoquinol methylase, mitochondrial (330 aa).

The N-terminal 42 residues, 1-42, are a transit peptide targeting the mitochondrion; the sequence is MAAPRSWALWSFCGCGWSRAVSGCRLPGLRSSSPRGPLGARL. Residues Thr-117, Asp-171, and 199-200 each bind S-adenosyl-L-methionine; that span reads DA.

Belongs to the class I-like SAM-binding methyltransferase superfamily. MenG/UbiE family. In terms of assembly, component of a multi-subunit COQ enzyme complex, composed of at least COQ3, COQ4, COQ5, COQ6, COQ7 and COQ9. Interacts with PYURF; the interaction is direct, stabilizes COQ5 protein and associates PYURF with COQ enzyme complex.

It localises to the mitochondrion inner membrane. The enzyme catalyses 2-methoxy-6-(all-trans-decaprenyl)benzene-1,4-diol + S-adenosyl-L-methionine = 5-methoxy-2-methyl-3-(all-trans-decaprenyl)benzene-1,4-diol + S-adenosyl-L-homocysteine + H(+). It participates in cofactor biosynthesis; ubiquinone biosynthesis. In terms of biological role, methyltransferase required for the conversion of 2-decaprenyl-6-methoxy-1,4-benzoquinol (DDMQH2) to 2-decaprenyl-3-methyl-6-methoxy-1,4-benzoquinol (DMQH2). The polypeptide is 2-methoxy-6-polyprenyl-1,4-benzoquinol methylase, mitochondrial (Bos taurus (Bovine)).